Consider the following 495-residue polypeptide: Mothers against decapentaplegic homolog 6 (495 aa).

Over residues 1-15 (MFRSKRSGLVRRLWR) the composition is skewed to basic residues. 2 disordered regions span residues 1–115 (MFRS…PGWL) and 133–161 (AAGAPRDSGDPQARQSPEPEEGGGPRSRE). A dimethylated arginine; alternate mark is found at Arg74 and Arg81. Omega-N-methylarginine; alternate occurs at positions 74 and 81. In terms of domain architecture, MH1 spans 149 to 276 (PEPEEGGGPR…FSRLCGPESP (128 aa)). Lys174 is covalently cross-linked (Glycyl lysine isopeptide (Lys-Gly) (interchain with G-Cter in ubiquitin)). 4 residues coordinate Zn(2+): Cys206, Cys248, Cys261, and His266. The MH2 domain occupies 332 to 495 (WCSVAYWEHR…WLEILLNNHR (164 aa)). Ser436 carries the post-translational modification Phosphoserine; by PRKX; in vitro.

This sequence belongs to the dwarfin/SMAD family. Interacts with NEDD4L. Interacts with WWP1. Interacts with STAMBP and PRKX. Interacts with RNF111 and AXIN1. Interacts with TGF-beta type I receptor superfamily members, including ACVR1B, BMPR1B and TGFBR1. In response to BMP2 treatment, interacts with SMAD1; this interaction may inhibit SMAD1-binding to SMAD4. Interacts with HOXC8 and HOXC9. Interacts with PELI1; this interaction interferes with PELI1 complex formation with TRAF6, IRAK1, IRAK4 and MYD88 in response to IL1B and hence negatively regulates IL1R-TLR signaling. Interacts with TSC22D1/TSC-22. In terms of processing, monoubiquitinated at Lys-174 by the E2/E3 hybrid ubiquitin-protein ligase UBE2O, leading to reduced binding affinity for the activated BMP type I receptor ACVR1/ALK2, thereby enhancing BMP7 and regulating adipocyte differentiation. Ubiquitinated by WWP1. Ubiquitinated by ARK2C, promoting proteasomal degradation, leading to enhance the BMP-Smad signaling. Arginine methylation by PRMT1, which is recruited by BMPR2, initiates BMP-Induced signaling and induces dissociation from the BMPR1B receptor at the cell surface leading to derepress downstream Smad1/Smad5 signaling. Post-translationally, phosphorylated by BMP type 1 receptor kinase and by PRKX. As to expression, ubiquitous in various organs, with higher levels in lung.

It localises to the nucleus. Functionally, transforming growth factor-beta superfamily receptors signaling occurs through the Smad family of intracellular mediators. SMAD6 is an inhibitory Smad (i-Smad) that negatively regulates signaling downstream of type I transforming growth factor-beta. Acts as a mediator of TGF-beta and BMP anti-inflammatory activities. Suppresses IL1R-TLR signaling through its direct interaction with PEL1, preventing NF-kappa-B activation, nuclear transport and NF-kappa-B-mediated expression of pro-inflammatory genes. Blocks the BMP-SMAD1 signaling pathway by competing with SMAD4 for receptor-activated SMAD1-binding. Binds to regulatory elements in target promoter regions. This is Mothers against decapentaplegic homolog 6 (Smad6) from Mus musculus (Mouse).